Consider the following 183-residue polypeptide: MAKRGNKKKQEAPLSLGKHTVGGRVGKPTNAKTGSALTSDKSLFDKRIVKQLKNNELFNRLTLPSQELRDGIVRENQTKPSNSNSQSNGAISIRGIAGPTNVVIENLAPGTSSDDVAATLLNFGEILNCQVNDSQGKVRASVRFSTLASAQQVVQKLDGVTADGFKLSCYIKKNSKKRRTQKK.

A disordered region spans residues Met-1–Ala-36. The RRM domain maps to Thr-100–Asn-174.

Its subcellular location is the nucleus. The protein localises to the nucleolus. This is an uncharacterized protein from Schizosaccharomyces pombe (strain 972 / ATCC 24843) (Fission yeast).